Reading from the N-terminus, the 226-residue chain is Pyridoxal 5'-phosphate synthase subunit PdxT (226 aa).

L-glutamine is bound at residue 60-62; that stretch reads GES. Cys92 serves as the catalytic Nucleophile. L-glutamine contacts are provided by residues Arg121 and 150 to 151; that span reads IR. Residues His191 and Glu193 each act as charge relay system in the active site.

The protein belongs to the glutaminase PdxT/SNO family. As to quaternary structure, in the presence of PdxS, forms a dodecamer of heterodimers. Only shows activity in the heterodimer.

It carries out the reaction aldehydo-D-ribose 5-phosphate + D-glyceraldehyde 3-phosphate + L-glutamine = pyridoxal 5'-phosphate + L-glutamate + phosphate + 3 H2O + H(+). The catalysed reaction is L-glutamine + H2O = L-glutamate + NH4(+). The protein operates within cofactor biosynthesis; pyridoxal 5'-phosphate biosynthesis. Catalyzes the hydrolysis of glutamine to glutamate and ammonia as part of the biosynthesis of pyridoxal 5'-phosphate. The resulting ammonia molecule is channeled to the active site of PdxS. This chain is Pyridoxal 5'-phosphate synthase subunit PdxT, found in Nocardia farcinica (strain IFM 10152).